A 338-amino-acid polypeptide reads, in one-letter code: Fructose-1,6-bisphosphatase class 1 (338 aa).

The Mg(2+) site is built by Glu94, Asp116, Leu118, and Asp119. Substrate is bound by residues 119 to 122, Asn210, and Lys276; that span reads DGSS. Residue Glu282 coordinates Mg(2+).

Belongs to the FBPase class 1 family. In terms of assembly, homotetramer. It depends on Mg(2+) as a cofactor.

It is found in the cytoplasm. It catalyses the reaction beta-D-fructose 1,6-bisphosphate + H2O = beta-D-fructose 6-phosphate + phosphate. It participates in carbohydrate biosynthesis; gluconeogenesis. The sequence is that of Fructose-1,6-bisphosphatase class 1 from Burkholderia thailandensis (strain ATCC 700388 / DSM 13276 / CCUG 48851 / CIP 106301 / E264).